The primary structure comprises 1367 residues: DNA polymerase III PolC-type (1367 aa).

Residues 358–513 (FVVLDFETTG…DDARVTAQVF (156 aa)) enclose the Exonuclease domain.

The protein belongs to the DNA polymerase type-C family. PolC subfamily.

It is found in the cytoplasm. It catalyses the reaction DNA(n) + a 2'-deoxyribonucleoside 5'-triphosphate = DNA(n+1) + diphosphate. Its function is as follows. Required for replicative DNA synthesis. This DNA polymerase also exhibits 3' to 5' exonuclease activity. The sequence is that of DNA polymerase III PolC-type from Thermotoga maritima (strain ATCC 43589 / DSM 3109 / JCM 10099 / NBRC 100826 / MSB8).